A 370-amino-acid polypeptide reads, in one-letter code: Histidinol-phosphate aminotransferase 1 (370 aa).

At lysine 229 the chain carries N6-(pyridoxal phosphate)lysine.

The protein belongs to the class-II pyridoxal-phosphate-dependent aminotransferase family. Histidinol-phosphate aminotransferase subfamily. In terms of assembly, homodimer. Pyridoxal 5'-phosphate serves as cofactor.

It carries out the reaction L-histidinol phosphate + 2-oxoglutarate = 3-(imidazol-4-yl)-2-oxopropyl phosphate + L-glutamate. It functions in the pathway amino-acid biosynthesis; L-histidine biosynthesis; L-histidine from 5-phospho-alpha-D-ribose 1-diphosphate: step 7/9. This chain is Histidinol-phosphate aminotransferase 1, found in Nitrosococcus oceani (strain ATCC 19707 / BCRC 17464 / JCM 30415 / NCIMB 11848 / C-107).